The sequence spans 408 residues: tRNA-specific 2-thiouridylase MnmA (408 aa).

ATP-binding positions include Gly38 to Ser45 and Met64. An interaction with target base in tRNA region spans residues Asn124–Asp126. Cys129 (nucleophile) is an active-site residue. Cysteines 129 and 231 form a disulfide. An ATP-binding site is contributed by Gly153. An interaction with tRNA region spans residues Lys181 to Gln183. The active-site Cysteine persulfide intermediate is the Cys231. An interaction with tRNA region spans residues Arg348–Tyr349.

Belongs to the MnmA/TRMU family.

It is found in the cytoplasm. It carries out the reaction S-sulfanyl-L-cysteinyl-[protein] + uridine(34) in tRNA + AH2 + ATP = 2-thiouridine(34) in tRNA + L-cysteinyl-[protein] + A + AMP + diphosphate + H(+). In terms of biological role, catalyzes the 2-thiolation of uridine at the wobble position (U34) of tRNA, leading to the formation of s(2)U34. The polypeptide is tRNA-specific 2-thiouridylase MnmA (Psychrobacter cryohalolentis (strain ATCC BAA-1226 / DSM 17306 / VKM B-2378 / K5)).